A 150-amino-acid polypeptide reads, in one-letter code: SsrA-binding protein (150 aa).

This sequence belongs to the SmpB family.

Its subcellular location is the cytoplasm. In terms of biological role, required for rescue of stalled ribosomes mediated by trans-translation. Binds to transfer-messenger RNA (tmRNA), required for stable association of tmRNA with ribosomes. tmRNA and SmpB together mimic tRNA shape, replacing the anticodon stem-loop with SmpB. tmRNA is encoded by the ssrA gene; the 2 termini fold to resemble tRNA(Ala) and it encodes a 'tag peptide', a short internal open reading frame. During trans-translation Ala-aminoacylated tmRNA acts like a tRNA, entering the A-site of stalled ribosomes, displacing the stalled mRNA. The ribosome then switches to translate the ORF on the tmRNA; the nascent peptide is terminated with the 'tag peptide' encoded by the tmRNA and targeted for degradation. The ribosome is freed to recommence translation, which seems to be the essential function of trans-translation. In Campylobacter curvus (strain 525.92), this protein is SsrA-binding protein.